Consider the following 177-residue polypeptide: MRSEVVNMLEYLYPLRTYLIVSGVEKPNVMTADWVVPLSFSPQLLGVAIGHSRYTHSLIKECGEFVVAVPTIELLKDVWKAGTLSGAKENKMEKLSLTLVESKKVKVPSIKECQANLECRVVKEVETGDHTLFVGEILHVTHGDAFKDGKPDINYKFVMHASFGKNFTTNSSERFEP.

This sequence belongs to the flavoredoxin family. Requires FMN as cofactor.

This is an uncharacterized protein from Archaeoglobus fulgidus (strain ATCC 49558 / DSM 4304 / JCM 9628 / NBRC 100126 / VC-16).